The sequence spans 101 residues: Citrate lyase acyl carrier protein (101 aa).

Ser14 is subject to O-(phosphoribosyl dephospho-coenzyme A)serine.

This sequence belongs to the CitD family. Oligomer with a subunit composition of (alpha,beta,gamma)6.

It localises to the cytoplasm. Functionally, covalent carrier of the coenzyme of citrate lyase. This Clostridium perfringens (strain 13 / Type A) protein is Citrate lyase acyl carrier protein.